The chain runs to 455 residues: Ammonium transporter Rh type B (455 aa).

At 1 to 10 (MARIPRHRRL) the chain is on the cytoplasmic side. The chain crosses the membrane as a helical span at residues 11-31 (VLPLLCLLFQGATSLLFAIFV). The Extracellular segment spans residues 32 to 58 (RYNHETDAALWHWGNHSNVDNEFYFRY). N-linked (GlcNAc...) asparagine glycosylation is present at Asn46. Residues 59-79 (PSFQDVHVMVFVGFGFLMVFL) traverse the membrane as a helical segment. Residues 80–83 (QRYG) lie on the Cytoplasmic side of the membrane. Residues 84 to 104 (FSSVGFTFLVATFTLQWATLL) traverse the membrane as a helical segment. At 105–121 (QGFLHSFHGGHIHIGVE) the chain is on the extracellular side. Residues 122 to 142 (SLINADFCAGAVLISFGAVLG) traverse the membrane as a helical segment. At 143–148 (KTGPAQ) the chain is on the cytoplasmic side. Residues 149-169 (LLLMALLEAVLFSVNEFILLS) form a helical membrane-spanning segment. At 170–176 (LLGVRDA) the chain is on the extracellular side. A helical membrane pass occupies residues 177-197 (GGSMTIHTFGAYFGLFLSRVL). Residues 198–216 (YRSQLEKSRHRQTSVYNSD) are Cytoplasmic-facing. The helical transmembrane segment at 217 to 237 (LFAMIGTIFLWVFWPSFNSAP) threads the bilayer. The Extracellular segment spans residues 238-247 (TALGDGQHRT). The helical transmembrane segment at 248-270 (VVNTYYSLTASTLSTFALSALVS) threads the bilayer. The Cytoplasmic segment spans residues 271–274 (GDGR). A helical membrane pass occupies residues 275 to 295 (LDMVHIQNAALAGGVVVGTAS). A topological domain (extracellular) is located at residue Glu296. The helical transmembrane segment at 297 to 317 (MMLTPFGALAAGFLAGTVSTL) threads the bilayer. The Cytoplasmic segment spans residues 318–340 (GYKFFTPILESRFKLQDTCGVHN). A helical membrane pass occupies residues 341-361 (LHGMPGLLGAILGVLVAALAT). Topologically, residues 362 to 390 (HEAYGDGLQTVFPLIAKGQRSATSQAMYQ) are extracellular. Residues 391–411 (LFGMFVTLVFASVGGSLGGLL) form a helical membrane-spanning segment. The Cytoplasmic segment spans residues 412 to 455 (LKLPFLDSPPDSQCFEDQVYWEVPGEQEAETQRPLRTEEPDTQA). The interaction with ANK3 stretch occupies residues 413-421 (KLPFLDSPP).

The protein belongs to the ammonium transporter (TC 2.A.49) family. Rh subfamily. In terms of assembly, interacts (via C-terminus) with ANK2 and ANK3; required for targeting to the basolateral membrane. Post-translationally, N-glycosylated. Expressed in kidney by connecting segments and collecting tubules (at protein level).

It localises to the basolateral cell membrane. Its subcellular location is the cytoplasmic vesicle membrane. The catalysed reaction is NH4(+)(in) = NH4(+)(out). It carries out the reaction methylamine(out) = methylamine(in). The enzyme catalyses CO2(out) = CO2(in). Functionally, ammonium transporter involved in the maintenance of acid-base homeostasis. Transports ammonium and its related derivative methylammonium across the basolateral plasma membrane of epithelial cells likely contributing to renal transepithelial ammonia transport and ammonia metabolism. May transport either NH4(+) or NH3 ammonia species predominantly mediating an electrogenic NH4(+) transport. May act as a CO2 channel providing for renal acid secretion. In Rattus norvegicus (Rat), this protein is Ammonium transporter Rh type B (Rhbg).